A 292-amino-acid polypeptide reads, in one-letter code: 5,10-methylenetetrahydrofolate reductase (292 aa).

Residue glutamate 26 is the Proton donor/acceptor of the active site. Threonine 57 provides a ligand contact to NADH. Tyrosine 58, alanine 60, histidine 86, arginine 116, glycine 117, aspartate 118, alanine 130, tyrosine 150, histidine 154, alanine 157, aspartate 163, asparagine 166, arginine 169, and lysine 170 together coordinate FAD. Aspartate 118 lines the (6S)-5-methyl-5,6,7,8-tetrahydrofolate pocket. Glutamine 181 lines the NADH pocket. (6S)-5-methyl-5,6,7,8-tetrahydrofolate contacts are provided by glutamine 181, glutamine 217, and arginine 277.

It belongs to the methylenetetrahydrofolate reductase family. The cofactor is FAD.

It catalyses the reaction (6S)-5-methyl-5,6,7,8-tetrahydrofolate + NAD(+) = (6R)-5,10-methylene-5,6,7,8-tetrahydrofolate + NADH + H(+). It functions in the pathway one-carbon metabolism; tetrahydrofolate interconversion. Its pathway is amino-acid biosynthesis; L-methionine biosynthesis via de novo pathway. Its function is as follows. Catalyzes the NADH-dependent reduction of 5,10-methylenetetrahydrofolate to 5-methyltetrahydrofolate. Is required to provide the methyl group necessary for methionine synthetase to convert homocysteine to methionine; the methyl group is given by 5-methyltetrahydrofolate. In Haemophilus influenzae (strain ATCC 51907 / DSM 11121 / KW20 / Rd), this protein is 5,10-methylenetetrahydrofolate reductase (metF).